Consider the following 146-residue polypeptide: Ribosome maturation factor RimP (146 aa).

Belongs to the RimP family.

It is found in the cytoplasm. Functionally, required for maturation of 30S ribosomal subunits. The polypeptide is Ribosome maturation factor RimP (Helicobacter pylori (strain J99 / ATCC 700824) (Campylobacter pylori J99)).